The following is an 88-amino-acid chain: Small ribosomal subunit protein bS20 (88 aa).

It belongs to the bacterial ribosomal protein bS20 family.

In terms of biological role, binds directly to 16S ribosomal RNA. In Brucella abortus (strain S19), this protein is Small ribosomal subunit protein bS20.